A 194-amino-acid polypeptide reads, in one-letter code: Peptidyl-tRNA hydrolase (194 aa).

TRNA is bound at residue Tyr17. His22 acts as the Proton acceptor in catalysis. 3 residues coordinate tRNA: Phe68, Asn70, and Asn116.

This sequence belongs to the PTH family. In terms of assembly, monomer.

It localises to the cytoplasm. It carries out the reaction an N-acyl-L-alpha-aminoacyl-tRNA + H2O = an N-acyl-L-amino acid + a tRNA + H(+). In terms of biological role, hydrolyzes ribosome-free peptidyl-tRNAs (with 1 or more amino acids incorporated), which drop off the ribosome during protein synthesis, or as a result of ribosome stalling. Functionally, catalyzes the release of premature peptidyl moieties from peptidyl-tRNA molecules trapped in stalled 50S ribosomal subunits, and thus maintains levels of free tRNAs and 50S ribosomes. The chain is Peptidyl-tRNA hydrolase from Haemophilus influenzae (strain PittGG).